The following is a 299-amino-acid chain: Peroxisomal biogenesis factor 19 (299 aa).

Positions 1 to 63 are disordered; the sequence is MAAAEEGCSV…SPGDTAKDAL (63 aa). Ala2 carries the N-acetylalanine modification. The segment at 2–56 is docking to the peroxisome membrane and binding to PEX3; it reads AAAEEGCSVGAEADRELEELLESALDDFDKAKPSPAPPSTTTAPDASGPQKRSPG. A necessary for PEX19 function on peroxisome biogenesis region spans residues 2–91; sequence AAAEEGCSVG…QATAEFEKAM (90 aa). Residues 16–27 show a composition bias toward acidic residues; it reads RELEELLESALD. Ser35, Ser54, and Ser66 each carry phosphoserine. Residue Thr236 is modified to Phosphothreonine. Cys296 carries the cysteine methyl ester modification. Cys296 carries S-farnesyl cysteine lipidation. A propeptide spans 297-299 (removed in mature form); sequence LIM.

The protein belongs to the peroxin-19 family. As to quaternary structure, interacts with a broad range of peroxisomal membrane proteins, including PEX3, PEX10, PEX11A, PEX11B, PEX12, PEX13, PEX14 and PEX16, PXMP2/PMP22, PXMP4/PMP24, SLC25A17/PMP34, ABCD1/ALDP, ABCD2/ALDRP, and ABCD3/PMP70. Also interacts with the tumor suppressor CDKN2A/p19ARF. (Microbial infection) Interacts with human cytomegalovirus protein UL37 isoform vMIA; this interaction inhibits the peroxisomal-dependent antiviral signaling. Ubiquitously expressed. Isoform 1 is strongly predominant in all tissues except in utero where isoform 2 is the main form.

It localises to the cytoplasm. Its subcellular location is the peroxisome membrane. Necessary for early peroxisomal biogenesis. Acts both as a cytosolic chaperone and as an import receptor for peroxisomal membrane proteins (PMPs). Binds and stabilizes newly synthesized PMPs in the cytoplasm by interacting with their hydrophobic membrane-spanning domains, and targets them to the peroxisome membrane by binding to the integral membrane protein PEX3. Excludes CDKN2A from the nucleus and prevents its interaction with MDM2, which results in active degradation of TP53. In Homo sapiens (Human), this protein is Peroxisomal biogenesis factor 19.